The sequence spans 519 residues: Tetratricopeptide repeat protein 31 (519 aa).

Residues 147–197 (QKLLVTEEEANRLAEELVAEEERMKQKAEKKRLKKKRQKERKRQERLEQYC) adopt a coiled-coil conformation. A compositionally biased stretch (basic residues) spans 175 to 187 (EKKRLKKKRQKER). Disordered regions lie at residues 175–230 (EKKR…EEDS) and 253–294 (RREK…VQAS). Residue serine 278 is modified to Phosphoserine. TPR repeat units follow at residues 305 to 338 (SQEL…NPQD), 339 to 372 (HRLF…RPGW), and 373 to 406 (PRGL…GSQP). A disordered region spans residues 474–506 (PSCHRSHPNQPLSQTQSRRPHPLKPQDPSKGWD). Residues 481 to 490 (PNQPLSQTQS) show a composition bias toward polar residues.

In Homo sapiens (Human), this protein is Tetratricopeptide repeat protein 31 (TTC31).